The sequence spans 311 residues: Olfactory receptor 6C3 (311 aa).

Residues 1–22 (MNHTMVTEFVLLGLSDDPDLQI) are Extracellular-facing. An N-linked (GlcNAc...) asparagine glycan is attached at asparagine 2. The chain crosses the membrane as a helical span at residues 23-43 (VIFLFLFITYILSVTGNLTII). Residues 44 to 51 (TLTFVDSH) lie on the Cytoplasmic side of the membrane. The chain crosses the membrane as a helical span at residues 52–72 (LQTPMYFFLRNFSFLEISFTT). At 73–96 (VCIPRFLGAIITRNKTISYNNCAA) the chain is on the extracellular side. Cysteine 94 and cysteine 186 are oxidised to a cystine. Residues 97 to 117 (QLFFFIFMGVTEFYILTAMSY) form a helical membrane-spanning segment. Residues 118–136 (DRYVAICKPLHYTSIMNRK) lie on the Cytoplasmic side of the membrane. The helical transmembrane segment at 137–157 (LCTLLVLCAWLSGFLTIFPPL) threads the bilayer. Residues 158-194 (MLLLQLDYCASNVIDHFACDYFPLLQLSCSDTWLLEV) are Extracellular-facing. The chain crosses the membrane as a helical span at residues 195–214 (IGFYFALVTLLFTLALVILS). The Cytoplasmic portion of the chain corresponds to 215–234 (YMYIIRTILRIPSASQRKKA). Residues 235–255 (FSTCSSHMIVISISYGSCIFM) traverse the membrane as a helical segment. Residues 256 to 268 (YANPSAKEKASLT) lie on the Extracellular side of the membrane. A helical transmembrane segment spans residues 269–289 (KGIAILNTSVAPMLNPFIYTL). The Cytoplasmic segment spans residues 290 to 311 (RNQQVKQAFKNVVHKVVFYANQ).

Belongs to the G-protein coupled receptor 1 family.

The protein localises to the cell membrane. Functionally, odorant receptor. The polypeptide is Olfactory receptor 6C3 (OR6C3) (Homo sapiens (Human)).